The chain runs to 270 residues: Decarboxylase NovR (270 aa).

The protein belongs to the aldolase class II family.

It participates in antibiotic biosynthesis; novobiocin biosynthesis. Functionally, may mediate the 2 consecutive oxidative decarboxylation steps in the biosynthesis of the prenylated hydroxybenzoic acid moiety of novobiocin, an aminocoumarin family antibiotic that targets bacterial DNA gyrases. The chain is Decarboxylase NovR (novR) from Streptomyces niveus (Streptomyces spheroides).